The sequence spans 100 residues: Large ribosomal subunit protein uL23 (100 aa).

This sequence belongs to the universal ribosomal protein uL23 family. Part of the 50S ribosomal subunit. Contacts protein L29, and trigger factor when it is bound to the ribosome.

In terms of biological role, one of the early assembly proteins it binds 23S rRNA. One of the proteins that surrounds the polypeptide exit tunnel on the outside of the ribosome. Forms the main docking site for trigger factor binding to the ribosome. The sequence is that of Large ribosomal subunit protein uL23 from Shewanella oneidensis (strain ATCC 700550 / JCM 31522 / CIP 106686 / LMG 19005 / NCIMB 14063 / MR-1).